The primary structure comprises 307 residues: Aspartate carbamoyltransferase catalytic subunit (307 aa).

R55 and T56 together coordinate carbamoyl phosphate. Position 85 (K85) interacts with L-aspartate. Carbamoyl phosphate contacts are provided by R106, H134, and Q137. L-aspartate-binding residues include R167 and R228. Carbamoyl phosphate-binding residues include L266 and P267.

Belongs to the aspartate/ornithine carbamoyltransferase superfamily. ATCase family. As to quaternary structure, heterododecamer (2C3:3R2) of six catalytic PyrB chains organized as two trimers (C3), and six regulatory PyrI chains organized as three dimers (R2).

It catalyses the reaction carbamoyl phosphate + L-aspartate = N-carbamoyl-L-aspartate + phosphate + H(+). Its pathway is pyrimidine metabolism; UMP biosynthesis via de novo pathway; (S)-dihydroorotate from bicarbonate: step 2/3. Functionally, catalyzes the condensation of carbamoyl phosphate and aspartate to form carbamoyl aspartate and inorganic phosphate, the committed step in the de novo pyrimidine nucleotide biosynthesis pathway. This Tolumonas auensis (strain DSM 9187 / NBRC 110442 / TA 4) protein is Aspartate carbamoyltransferase catalytic subunit.